Here is a 61-residue protein sequence, read N- to C-terminus: MAKKALVNKANRKPKFAVRAYTRCQRCGRPHAVYRKFGLCRVCLRDMAHKGELPGVHKSSW.

Residues Cys-24, Cys-27, Cys-40, and Cys-43 each coordinate Zn(2+).

This sequence belongs to the universal ribosomal protein uS14 family. Zinc-binding uS14 subfamily. In terms of assembly, part of the 30S ribosomal subunit. Contacts proteins S3 and S10. Requires Zn(2+) as cofactor.

Functionally, binds 16S rRNA, required for the assembly of 30S particles and may also be responsible for determining the conformation of the 16S rRNA at the A site. In Nocardia farcinica (strain IFM 10152), this protein is Small ribosomal subunit protein uS14B.